A 79-amino-acid chain; its full sequence is Conotoxin PnMSGL-03 (79 aa).

The N-terminal stretch at 1–20 (MSRLGIMVLTLLLLVFIVTS) is a signal peptide. The propeptide occupies 21-44 (HQDAGEKQATQRDAINFRWRRSLI). 3 cysteine pairs are disulfide-bonded: C52-C64, C56-C73, and C63-C77. Residue L78 is modified to Leucine amide.

The protein belongs to the conotoxin O3 superfamily. As to expression, expressed by the venom duct.

The protein localises to the secreted. The polypeptide is Conotoxin PnMSGL-03 (Conus pennaceus (Feathered cone)).